A 347-amino-acid polypeptide reads, in one-letter code: Heme A synthase (347 aa).

Helical transmembrane passes span 17–37, 106–126, 132–152, 165–185, 202–222, 260–280, 295–315, and 317–337; these read LANWLLLVAVLVFAIVVVGGI, GIGAVLAGVMIVAWWKRAIPA, MIGIFALGGLQGAIGWWMVYS, LATHLIAALLIFSALVWTVLD, ALAIAAVLILAVQIMLGAFVA, IVVQFVHRWWAWAAAIAALAV, AVATLIVVQIALGIATLLTGV, and IAVAVAHQAVAVLLLAALLWA. His266 serves as a coordination point for heme. A heme-binding site is contributed by His323.

Belongs to the COX15/CtaA family. Type 2 subfamily. Interacts with CtaB. Requires heme b as cofactor.

Its subcellular location is the cell membrane. It catalyses the reaction Fe(II)-heme o + 2 A + H2O = Fe(II)-heme a + 2 AH2. Its pathway is porphyrin-containing compound metabolism; heme A biosynthesis; heme A from heme O: step 1/1. Catalyzes the conversion of heme O to heme A by two successive hydroxylations of the methyl group at C8. The first hydroxylation forms heme I, the second hydroxylation results in an unstable dihydroxymethyl group, which spontaneously dehydrates, resulting in the formyl group of heme A. This is Heme A synthase from Rhizorhabdus wittichii (strain DSM 6014 / CCUG 31198 / JCM 15750 / NBRC 105917 / EY 4224 / RW1) (Sphingomonas wittichii).